A 570-amino-acid chain; its full sequence is Urease subunit alpha (570 aa).

One can recognise a Urease domain in the interval 131–570; it reads GGVDTHIHFI…LPMAQRYFLF (440 aa). Ni(2+) contacts are provided by histidine 136, histidine 138, and lysine 219. Residue lysine 219 is modified to N6-carboxylysine. Substrate is bound at residue histidine 221. Ni(2+) contacts are provided by histidine 248 and histidine 274. Residue histidine 322 is the Proton donor of the active site. Ni(2+) is bound at residue aspartate 362.

Belongs to the metallo-dependent hydrolases superfamily. Urease alpha subunit family. In terms of assembly, heterotrimer of UreA (gamma), UreB (beta) and UreC (alpha) subunits. Three heterotrimers associate to form the active enzyme. Ni cation serves as cofactor. Post-translationally, carboxylation allows a single lysine to coordinate two nickel ions.

The protein resides in the cytoplasm. The enzyme catalyses urea + 2 H2O + H(+) = hydrogencarbonate + 2 NH4(+). It participates in nitrogen metabolism; urea degradation; CO(2) and NH(3) from urea (urease route): step 1/1. The sequence is that of Urease subunit alpha from Methylocella silvestris (strain DSM 15510 / CIP 108128 / LMG 27833 / NCIMB 13906 / BL2).